The chain runs to 640 residues: DNA topoisomerase 3 (640 aa).

One can recognise a Toprim domain in the interval 21 to 175 (RVLCVAEKNS…WRAQFSHLEP (155 aa)). Mg(2+) contacts are provided by E27, D137, and D139. The Topo IA-type catalytic domain occupies 189 to 618 (DMKLVAAVEC…QLLPLYKEAF (430 aa)). The O-(5'-phospho-DNA)-tyrosine intermediate role is filled by Y354.

The protein belongs to the type IA topoisomerase family. The cofactor is Mg(2+).

It carries out the reaction ATP-independent breakage of single-stranded DNA, followed by passage and rejoining.. Introduces a single-strand break via transesterification at a target site in duplex DNA. Releases the supercoiling and torsional tension of DNA introduced during the DNA replication and transcription by transiently cleaving and rejoining one strand of the DNA duplex. The scissile phosphodiester is attacked by the catalytic tyrosine of the enzyme, resulting in the formation of a DNA-(5'-phosphotyrosyl)-enzyme intermediate and the expulsion of a 3'-OH DNA strand. The polypeptide is DNA topoisomerase 3 (TOP3) (Candidozyma auris (Yeast)).